Here is a 139-residue protein sequence, read N- to C-terminus: Putative pre-16S rRNA nuclease (139 aa).

This sequence belongs to the YqgF nuclease family.

It is found in the cytoplasm. Its function is as follows. Could be a nuclease involved in processing of the 5'-end of pre-16S rRNA. The polypeptide is Putative pre-16S rRNA nuclease (Haemophilus influenzae (strain 86-028NP)).